A 1126-amino-acid chain; its full sequence is NUT family member 1 (1126 aa).

Disordered stretches follow at residues 1–56, 334–367, 475–515, 537–559, 664–692, 755–810, and 932–1014; these read MASD…PVFS, IPKKAASKTRAPRRRQRKPQRPPVPEAPKEIPPE, EDAQ…QGAA, QEQTLGGPAGIHKDGNNLPSPSS, AGMLTRGREPPSVVSQKGSSRAVRGDDRG, ALNS…GPGL, and GEGR…EELS. The segment covering 30–55 has biased composition (pro residues); that stretch reads FAPPPPVPPDQPLWEPSPQPPIPPVF. Residues 338 to 353 show a composition bias toward basic residues; the sequence is AASKTRAPRRRQRKPQ. Positions 962 to 975 are enriched in polar residues; the sequence is KLTNGQGQGSTSPR. Ser973 carries the phosphoserine modification. Residues 987–1005 are compositionally biased toward basic and acidic residues; that stretch reads TPIKEKCTSADRAKRRETE. Residues Ser1022, Ser1025, and Ser1027 each carry the phosphoserine modification. The interval 1032–1126 is disordered; sequence PLSTRQASGG…SKRKKRRRSQ (95 aa). An N5-methylglutamine modification is found at Gln1042. Positions 1106 to 1126 are enriched in basic residues; the sequence is PRKRRRDGFVTSKRKKRRRSQ.

The protein belongs to the NUT family. Methylated at Gln-1042 by N6AMT1. In terms of processing, phosphorylation on Ser-1022, Ser-1025 or Ser-1027 is important for cytoplasmic export.

It localises to the cytoplasm. It is found in the nucleus. In terms of biological role, plays a role in the regulation of proliferation. Regulates TERT expression by modulating SP1 binding to TERT promoter binding sites. This chain is NUT family member 1, found in Mus musculus (Mouse).